We begin with the raw amino-acid sequence, 192 residues long: Probable nicotinate-nucleotide adenylyltransferase (192 aa).

Belongs to the NadD family.

The enzyme catalyses nicotinate beta-D-ribonucleotide + ATP + H(+) = deamido-NAD(+) + diphosphate. Its pathway is cofactor biosynthesis; NAD(+) biosynthesis; deamido-NAD(+) from nicotinate D-ribonucleotide: step 1/1. In terms of biological role, catalyzes the reversible adenylation of nicotinate mononucleotide (NaMN) to nicotinic acid adenine dinucleotide (NaAD). The sequence is that of Probable nicotinate-nucleotide adenylyltransferase from Bradyrhizobium sp. (strain ORS 278).